Here is a 334-residue protein sequence, read N- to C-terminus: Protein-glutamate methylesterase/protein-glutamine glutaminase 2 (334 aa).

The Response regulatory domain occupies 2 to 120 (NIGIVNDLPL…GAAGDTTKLL (119 aa)). D53 bears the 4-aspartylphosphate mark. In terms of domain architecture, CheB-type methylesterase spans 134–334 (PGSSRLAGAA…AGELAALARI (201 aa)). Active-site residues include S157, H184, and D277.

It belongs to the CheB family. Post-translationally, phosphorylated by CheA. Phosphorylation of the N-terminal regulatory domain activates the methylesterase activity.

It localises to the cytoplasm. It catalyses the reaction [protein]-L-glutamate 5-O-methyl ester + H2O = L-glutamyl-[protein] + methanol + H(+). It carries out the reaction L-glutaminyl-[protein] + H2O = L-glutamyl-[protein] + NH4(+). Functionally, involved in chemotaxis. Part of a chemotaxis signal transduction system that modulates chemotaxis in response to various stimuli. Catalyzes the demethylation of specific methylglutamate residues introduced into the chemoreceptors (methyl-accepting chemotaxis proteins or MCP) by CheR. Also mediates the irreversible deamidation of specific glutamine residues to glutamic acid. The chain is Protein-glutamate methylesterase/protein-glutamine glutaminase 2 from Burkholderia orbicola (strain AU 1054).